A 298-amino-acid polypeptide reads, in one-letter code: Diphthine methyl ester synthase (298 aa).

S-adenosyl-L-methionine-binding positions include leucine 9, aspartate 85, glycine 88, 113 to 114 (SV), leucine 164, leucine 222, and histidine 247.

This sequence belongs to the diphthine synthase family.

The protein resides in the cytoplasm. The enzyme catalyses 2-[(3S)-amino-3-carboxypropyl]-L-histidyl-[translation elongation factor 2] + 4 S-adenosyl-L-methionine = diphthine methyl ester-[translation elongation factor 2] + 4 S-adenosyl-L-homocysteine + 3 H(+). The protein operates within protein modification; peptidyl-diphthamide biosynthesis. Its function is as follows. S-adenosyl-L-methionine-dependent methyltransferase that catalyzes four methylations of the modified target histidine residue in translation elongation factor 2 (EF-2), to form an intermediate called diphthine methyl ester. The four successive methylation reactions represent the second step of diphthamide biosynthesis. In Candida glabrata (strain ATCC 2001 / BCRC 20586 / JCM 3761 / NBRC 0622 / NRRL Y-65 / CBS 138) (Yeast), this protein is Diphthine methyl ester synthase (DPH5).